The primary structure comprises 246 residues: Bis(5'-nucleosyl)-tetraphosphatase PrpE [asymmetrical] (246 aa).

It belongs to the PrpE family. Requires Ni(2+) as cofactor.

It catalyses the reaction P(1),P(4)-bis(5'-guanosyl) tetraphosphate + H2O = GMP + GTP + 2 H(+). In terms of biological role, asymmetrically hydrolyzes Ap4p to yield AMP and ATP. This Bacillus cereus (strain ATCC 10987 / NRS 248) protein is Bis(5'-nucleosyl)-tetraphosphatase PrpE [asymmetrical].